Reading from the N-terminus, the 385-residue chain is Probable dual-specificity RNA methyltransferase RlmN (385 aa).

The disordered stretch occupies residues methionine 1–histidine 24. The active-site Proton acceptor is glutamate 114. One can recognise a Radical SAM core domain in the interval tyrosine 120–arginine 364. An intrachain disulfide couples cysteine 127 to cysteine 370. Positions 134, 138, and 141 each coordinate [4Fe-4S] cluster. S-adenosyl-L-methionine is bound by residues glycine 194–glutamate 195, serine 228, serine 251–histidine 253, and asparagine 327. Cysteine 370 functions as the S-methylcysteine intermediate in the catalytic mechanism.

It belongs to the radical SAM superfamily. RlmN family. Requires [4Fe-4S] cluster as cofactor.

The protein localises to the cytoplasm. The catalysed reaction is adenosine(2503) in 23S rRNA + 2 reduced [2Fe-2S]-[ferredoxin] + 2 S-adenosyl-L-methionine = 2-methyladenosine(2503) in 23S rRNA + 5'-deoxyadenosine + L-methionine + 2 oxidized [2Fe-2S]-[ferredoxin] + S-adenosyl-L-homocysteine. It carries out the reaction adenosine(37) in tRNA + 2 reduced [2Fe-2S]-[ferredoxin] + 2 S-adenosyl-L-methionine = 2-methyladenosine(37) in tRNA + 5'-deoxyadenosine + L-methionine + 2 oxidized [2Fe-2S]-[ferredoxin] + S-adenosyl-L-homocysteine. In terms of biological role, specifically methylates position 2 of adenine 2503 in 23S rRNA and position 2 of adenine 37 in tRNAs. This Parafrankia sp. (strain EAN1pec) protein is Probable dual-specificity RNA methyltransferase RlmN.